The chain runs to 90 residues: Cell division topological specificity factor 2 (90 aa).

Belongs to the MinE family.

Prevents the cell division inhibition by proteins MinC and MinD at internal division sites while permitting inhibition at polar sites. This ensures cell division at the proper site by restricting the formation of a division septum at the midpoint of the long axis of the cell. The polypeptide is Cell division topological specificity factor 2 (Syntrophomonas wolfei subsp. wolfei (strain DSM 2245B / Goettingen)).